The chain runs to 114 residues: Putative pterin-4-alpha-carbinolamine dehydratase (114 aa).

The protein belongs to the pterin-4-alpha-carbinolamine dehydratase family.

It catalyses the reaction (4aS,6R)-4a-hydroxy-L-erythro-5,6,7,8-tetrahydrobiopterin = (6R)-L-erythro-6,7-dihydrobiopterin + H2O. The sequence is that of Putative pterin-4-alpha-carbinolamine dehydratase from Chlorobium luteolum (strain DSM 273 / BCRC 81028 / 2530) (Pelodictyon luteolum).